The following is a 306-amino-acid chain: 4-hydroxy-tetrahydrodipicolinate synthase (306 aa).

Thr49 is a binding site for pyruvate. Tyr136 acts as the Proton donor/acceptor in catalysis. Catalysis depends on Lys164, which acts as the Schiff-base intermediate with substrate. Residue Ile207 participates in pyruvate binding.

It belongs to the DapA family. As to quaternary structure, homotetramer; dimer of dimers.

It localises to the cytoplasm. The catalysed reaction is L-aspartate 4-semialdehyde + pyruvate = (2S,4S)-4-hydroxy-2,3,4,5-tetrahydrodipicolinate + H2O + H(+). It functions in the pathway amino-acid biosynthesis; L-lysine biosynthesis via DAP pathway; (S)-tetrahydrodipicolinate from L-aspartate: step 3/4. Functionally, catalyzes the condensation of (S)-aspartate-beta-semialdehyde [(S)-ASA] and pyruvate to 4-hydroxy-tetrahydrodipicolinate (HTPA). In Haloarcula marismortui (strain ATCC 43049 / DSM 3752 / JCM 8966 / VKM B-1809) (Halobacterium marismortui), this protein is 4-hydroxy-tetrahydrodipicolinate synthase.